A 334-amino-acid chain; its full sequence is MNAVIEQRKVLLEIADLKVHFDIKEGKQWFWQPPKTLKAVDGVTLRLYEGETLGVVGESGCGKSTFARAIIGLVKATDGKVAWLGKDLLGMKADEWREVRSDIQMIFQDPLASLNPRMTIGEIIAEPLRTYHPKLSRQDVRDRVKAMMLKVGLLPNLINRYPHEFSGGQCQRIGIARALILEPKLIICDEPVSALDVSIQAQVVNLLQQLQREMGLSLIFIAHDLAVVKHISDRVLVMYLGHAVELGTYDEVYHNPLHPYTKALMSAVPIPDPDLERNKKIQLLEGELPSPINPPSGCVFRTRCPIAGPECAQTRPVLEGSFRHAVSCLKVDPL.

The region spanning 12–265 (LEIADLKVHF…PLHPYTKALM (254 aa)) is the ABC transporter domain. 57 to 64 (GESGCGKS) is a binding site for ATP.

It belongs to the ABC transporter superfamily. The complex is composed of two ATP-binding proteins (OppD and OppF), two transmembrane proteins (OppB and OppC) and a solute-binding protein (OppA).

The protein resides in the cell inner membrane. It catalyses the reaction a [peptide](out) + ATP + H2O = a [peptide](in) + ADP + phosphate + H(+). It carries out the reaction L-alanyl-gamma-D-glutamyl-meso-2,6-diaminopimelate(out) + ATP + H2O = L-alanyl-gamma-D-glutamyl-meso-2,6-diaminopimelate(in) + ADP + phosphate + H(+). Part of the ABC transporter complex OppABCDF involved in the uptake of oligopeptides, including the cell wall murein tripeptide L-alanyl-gamma-D-glutamyl-meso-diaminopimelate. Probably responsible for energy coupling to the transport system. Plays an important nutritional role and is involved in the recycling of cell wall peptides. The protein is Oligopeptide transport ATP-binding protein OppF of Salmonella typhimurium (strain LT2 / SGSC1412 / ATCC 700720).